Here is a 487-residue protein sequence, read N- to C-terminus: Bifunctional protein GlmU (487 aa).

The interval 1–240 (MAEVTNCAAI…PEELSGVNDR (240 aa)) is pyrophosphorylase. UDP-N-acetyl-alpha-D-glucosamine is bound by residues 12–15 (LAAG), K26, Q83, and 88–89 (GT). D113 contributes to the Mg(2+) binding site. UDP-N-acetyl-alpha-D-glucosamine-binding residues include G150, E165, N180, and N238. A Mg(2+)-binding site is contributed by N238. The tract at residues 241 to 261 (VQLAAAGRLLNRRMVEEAMRG) is linker. Residues 262 to 487 (GTTIVDPDTT…DAKANDQTTN (226 aa)) form an N-acetyltransferase region. UDP-N-acetyl-alpha-D-glucosamine is bound by residues R343 and K361. The Proton acceptor role is filled by H373. UDP-N-acetyl-alpha-D-glucosamine is bound by residues Y376 and N387. Acetyl-CoA contacts are provided by residues A390, 396 to 397 (NY), S415, and A433. Positions 449–487 (SGGKQRNIEGWVQKKRPGTPAAEAAGKAQDAKANDQTTN) are disordered.

The protein in the N-terminal section; belongs to the N-acetylglucosamine-1-phosphate uridyltransferase family. This sequence in the C-terminal section; belongs to the transferase hexapeptide repeat family. Homotrimer. It depends on Mg(2+) as a cofactor.

The protein localises to the cytoplasm. The catalysed reaction is alpha-D-glucosamine 1-phosphate + acetyl-CoA = N-acetyl-alpha-D-glucosamine 1-phosphate + CoA + H(+). The enzyme catalyses N-acetyl-alpha-D-glucosamine 1-phosphate + UTP + H(+) = UDP-N-acetyl-alpha-D-glucosamine + diphosphate. It participates in nucleotide-sugar biosynthesis; UDP-N-acetyl-alpha-D-glucosamine biosynthesis; N-acetyl-alpha-D-glucosamine 1-phosphate from alpha-D-glucosamine 6-phosphate (route II): step 2/2. Its pathway is nucleotide-sugar biosynthesis; UDP-N-acetyl-alpha-D-glucosamine biosynthesis; UDP-N-acetyl-alpha-D-glucosamine from N-acetyl-alpha-D-glucosamine 1-phosphate: step 1/1. The protein operates within bacterial outer membrane biogenesis; LPS lipid A biosynthesis. Its function is as follows. Catalyzes the last two sequential reactions in the de novo biosynthetic pathway for UDP-N-acetylglucosamine (UDP-GlcNAc). The C-terminal domain catalyzes the transfer of acetyl group from acetyl coenzyme A to glucosamine-1-phosphate (GlcN-1-P) to produce N-acetylglucosamine-1-phosphate (GlcNAc-1-P), which is converted into UDP-GlcNAc by the transfer of uridine 5-monophosphate (from uridine 5-triphosphate), a reaction catalyzed by the N-terminal domain. In Corynebacterium aurimucosum (strain ATCC 700975 / DSM 44827 / CIP 107346 / CN-1) (Corynebacterium nigricans), this protein is Bifunctional protein GlmU.